Reading from the N-terminus, the 429-residue chain is UDP-N-acetylglucosamine 1-carboxyvinyltransferase (429 aa).

Residue 22–23 coordinates phosphoenolpyruvate; sequence KN. Arg-102 provides a ligand contact to UDP-N-acetyl-alpha-D-glucosamine. Cys-126 serves as the catalytic Proton donor. Cys-126 bears the 2-(S-cysteinyl)pyruvic acid O-phosphothioketal mark. UDP-N-acetyl-alpha-D-glucosamine contacts are provided by Asp-316 and Ile-338.

Belongs to the EPSP synthase family. MurA subfamily.

Its subcellular location is the cytoplasm. It catalyses the reaction phosphoenolpyruvate + UDP-N-acetyl-alpha-D-glucosamine = UDP-N-acetyl-3-O-(1-carboxyvinyl)-alpha-D-glucosamine + phosphate. It participates in cell wall biogenesis; peptidoglycan biosynthesis. Cell wall formation. Adds enolpyruvyl to UDP-N-acetylglucosamine. In Methylorubrum extorquens (strain PA1) (Methylobacterium extorquens), this protein is UDP-N-acetylglucosamine 1-carboxyvinyltransferase.